A 219-amino-acid chain; its full sequence is Cytidylate kinase (219 aa).

21 to 29 (GPAASGKGT) serves as a coordination point for ATP.

It belongs to the cytidylate kinase family. Type 1 subfamily.

Its subcellular location is the cytoplasm. It catalyses the reaction CMP + ATP = CDP + ADP. The catalysed reaction is dCMP + ATP = dCDP + ADP. This Rickettsia rickettsii (strain Iowa) protein is Cytidylate kinase.